The chain runs to 387 residues: 1-deoxy-D-xylulose 5-phosphate reductoisomerase (387 aa).

7 residues coordinate NADPH: T11, G12, S13, I14, G37, R39, and N123. K124 lines the 1-deoxy-D-xylulose 5-phosphate pocket. E125 lines the NADPH pocket. Mn(2+) is bound at residue D147. 1-deoxy-D-xylulose 5-phosphate is bound by residues S148, E149, S173, and H196. E149 contacts Mn(2+). NADPH is bound at residue G202. The 1-deoxy-D-xylulose 5-phosphate site is built by S209, N214, K215, and E218. E218 contributes to the Mn(2+) binding site.

The protein belongs to the DXR family. Mg(2+) serves as cofactor. The cofactor is Mn(2+).

The catalysed reaction is 2-C-methyl-D-erythritol 4-phosphate + NADP(+) = 1-deoxy-D-xylulose 5-phosphate + NADPH + H(+). The protein operates within isoprenoid biosynthesis; isopentenyl diphosphate biosynthesis via DXP pathway; isopentenyl diphosphate from 1-deoxy-D-xylulose 5-phosphate: step 1/6. Functionally, catalyzes the NADPH-dependent rearrangement and reduction of 1-deoxy-D-xylulose-5-phosphate (DXP) to 2-C-methyl-D-erythritol 4-phosphate (MEP). This is 1-deoxy-D-xylulose 5-phosphate reductoisomerase from Corynebacterium diphtheriae (strain ATCC 700971 / NCTC 13129 / Biotype gravis).